A 407-amino-acid chain; its full sequence is Bifunctional enzyme IspD/IspF (407 aa).

Residues 1 to 246 are 2-C-methyl-D-erythritol 4-phosphate cytidylyltransferase; the sequence is MTEASENASA…SSERTHFPDI (246 aa). The segment at 247–407 is 2-C-methyl-D-erythritol 2,4-cyclodiphosphate synthase; sequence RTGNGYDVHA…SVVFPGEVPE (161 aa). A divalent metal cation contacts are provided by aspartate 253 and histidine 255. Residues 253–255 and 279–280 each bind 4-CDP-2-C-methyl-D-erythritol 2-phosphate; these read DVH and HS. Histidine 287 is a binding site for a divalent metal cation. Residues 301-303, 377-380, phenylalanine 384, and arginine 387 each bind 4-CDP-2-C-methyl-D-erythritol 2-phosphate; these read DIG and TTNE.

It in the N-terminal section; belongs to the IspD/TarI cytidylyltransferase family. IspD subfamily. In the C-terminal section; belongs to the IspF family. Requires a divalent metal cation as cofactor.

It carries out the reaction 2-C-methyl-D-erythritol 4-phosphate + CTP + H(+) = 4-CDP-2-C-methyl-D-erythritol + diphosphate. It catalyses the reaction 4-CDP-2-C-methyl-D-erythritol 2-phosphate = 2-C-methyl-D-erythritol 2,4-cyclic diphosphate + CMP. It participates in isoprenoid biosynthesis; isopentenyl diphosphate biosynthesis via DXP pathway; isopentenyl diphosphate from 1-deoxy-D-xylulose 5-phosphate: step 2/6. It functions in the pathway isoprenoid biosynthesis; isopentenyl diphosphate biosynthesis via DXP pathway; isopentenyl diphosphate from 1-deoxy-D-xylulose 5-phosphate: step 4/6. Its function is as follows. Bifunctional enzyme that catalyzes the formation of 4-diphosphocytidyl-2-C-methyl-D-erythritol from CTP and 2-C-methyl-D-erythritol 4-phosphate (MEP) (IspD), and catalyzes the conversion of 4-diphosphocytidyl-2-C-methyl-D-erythritol 2-phosphate (CDP-ME2P) to 2-C-methyl-D-erythritol 2,4-cyclodiphosphate (ME-CPP) with a corresponding release of cytidine 5-monophosphate (CMP) (IspF). The chain is Bifunctional enzyme IspD/IspF from Mesorhizobium japonicum (strain LMG 29417 / CECT 9101 / MAFF 303099) (Mesorhizobium loti (strain MAFF 303099)).